We begin with the raw amino-acid sequence, 83 residues long: Protein kreg-1 (83 aa).

Residues 62–83 (GHHHHHHGHHFGHHHHHHHGHH) are disordered.

In terms of tissue distribution, weakly expressed in the intestine, but expression is up-regulated in response to Cu(2+).

In terms of biological role, plays a role in the stress response to heavy metals such as copper, probably in a fos-1/kgb-1-dependent manner. The polypeptide is Protein kreg-1 (Caenorhabditis elegans).